We begin with the raw amino-acid sequence, 419 residues long: Napsin-A (419 aa).

The first 16 residues, 1 to 16, serve as a signal peptide directing secretion; that stretch reads MSPLLLLLLCLLLGNL. Residues 73 to 394 enclose the Peptidase A1 domain; that stretch reads YFGTIGLGTP…KNVGPRVGLA (322 aa). Asparagine 85 is a glycosylation site (N-linked (GlcNAc...) asparagine). Residue aspartate 91 is part of the active site. Cysteine 104 and cysteine 111 form a disulfide bridge. N-linked (GlcNAc...) asparagine glycans are attached at residues asparagine 128 and asparagine 149. Cysteine 269 and cysteine 273 are disulfide-bonded. Aspartate 278 is an active-site residue. An intrachain disulfide couples cysteine 312 to cysteine 349. Asparagine 331 carries an N-linked (GlcNAc...) asparagine glycan. A disordered region spans residues 391–419; it reads VGLARAQSRSTDRAERRTTQAQFFKRRPG.

This sequence belongs to the peptidase A1 family. As to expression, expressed at the highest levels in the kidney, at a moderate level in the lung, and at low levels in the spleen and adipose tissue.

The protein resides in the secreted. Functionally, may be involved in processing of pneumocyte surfactant precursors. The protein is Napsin-A (Napsa) of Mus musculus (Mouse).